Consider the following 213-residue polypeptide: UPF0056 membrane protein AF_2111 (213 aa).

The next 6 helical transmembrane spans lie at methionine 1–isoleucine 21, isoleucine 51–phenylalanine 71, isoleucine 75–leucine 95, valine 118–leucine 138, alanine 142–valine 162, and alanine 181–phenylalanine 201.

Belongs to the UPF0056 (MarC) family.

It localises to the cell membrane. The chain is UPF0056 membrane protein AF_2111 from Archaeoglobus fulgidus (strain ATCC 49558 / DSM 4304 / JCM 9628 / NBRC 100126 / VC-16).